Consider the following 150-residue polypeptide: Large ribosomal subunit protein uL15 (150 aa).

The segment at Met1 to His58 is disordered.

The protein belongs to the universal ribosomal protein uL15 family. Part of the 50S ribosomal subunit.

Its function is as follows. Binds to the 23S rRNA. This is Large ribosomal subunit protein uL15 from Solibacter usitatus (strain Ellin6076).